A 2547-amino-acid chain; its full sequence is Piezo-type mechanosensitive ion channel component 1 (2547 aa).

Over 1-12 (MEPHVLGAGLYW) the chain is Cytoplasmic. The chain crosses the membrane as a helical span at residues 13 to 25 (LLLPCTLLAASLL). The Extracellular segment spans residues 26–28 (RFN). The chain crosses the membrane as a helical span at residues 29-44 (ALSLVYLLFLLLLPWL). The Cytoplasmic segment spans residues 45–58 (PGPSRHSIPGHTGR). Residues 59–81 (LLRALLCLSLLFLVAHLAFQICL) form a helical membrane-spanning segment. The Extracellular portion of the chain corresponds to 82 to 121 (HTVPHLDQFLGQNGSLWVKVSQHIGVTRLDLKDIFNTTRL). The N-linked (GlcNAc...) asparagine glycan is linked to N94. Residues 122 to 138 (VAPDLGVLLASSLCLGL) traverse the membrane as a helical segment. Residues 139 to 201 (CGRLTRKAGQ…ASRFRVTAHW (63 aa)) are Cytoplasmic-facing. Residues 202-221 (LLMTSGRTLVIVLLALAGIA) traverse the membrane as a helical segment. At 222–223 (HP) the chain is on the extracellular side. The chain crosses the membrane as a helical span at residues 224–243 (SAFSSIYLVVFLAICTWWSC). The Cytoplasmic segment spans residues 244-254 (HFPLSPLGFNT). A helical transmembrane segment spans residues 255–275 (LCVMVSCFGAGHLICLYCYQT). At 276–316 (PFIQDMLPPGNIWARLFGLKNFVDLPNYSSPNALVLNTKHA) the chain is on the extracellular side. Residues 317-337 (WPIYVSPGILLLLYYTATSLL) traverse the membrane as a helical segment. Residues 338–424 (KLHKSCPSEL…EMSPLHGLGH (87 aa)) lie on the Cytoplasmic side of the membrane. The interval 347–387 (LRKETPREDEEHELELDHLEPEPQARDATQGEMPMTTEPDL) is disordered. Positions 361-371 (ELDHLEPEPQA) are enriched in basic and acidic residues. A helical membrane pass occupies residues 425-445 (LIMDQSYVCALIAMMVWSIMY). At 446 to 447 (HS) the chain is on the extracellular side. A helical membrane pass occupies residues 448–463 (WLTFVLLLWACLIWTV). Over 464-468 (RSRHQ) the chain is Cytoplasmic. A helical membrane pass occupies residues 469 to 491 (LAMLCSPCILLYGLTLCCLRYVW). The Extracellular segment spans residues 492 to 518 (AMELPELPTTLGPVSLHQLGLEHTRYP). A helical transmembrane segment spans residues 519–536 (CLDLGAMLLYLLTFWLLL). The Cytoplasmic segment spans residues 537–580 (RQFVKEKLLKKQKVPAALLEVTVADTEPTQTQTLLRSLGELVTG). Residues 581–601 (IYVKYWIYVCAGMFIVVSFAG) traverse the membrane as a helical segment. R602 is a topological domain (extracellular). A helical membrane pass occupies residues 603-623 (LVVYKIVYMFLFLLCLTLFQV). At 624-633 (YYTLWRKLLR) the chain is on the cytoplasmic side. Residues 634–655 (VFWWLVVAYTMLVLIAVYTFQF) form a helical membrane-spanning segment. Topologically, residues 656–685 (QDFPTYWRNLTGFTDEQLGDLGLEQFSVSE) are extracellular. A helical transmembrane segment spans residues 686-702 (LFSSILIPGFFLLACIL). Residues 703 to 811 (QLHYFHRPFM…RRLLELHVFK (109 aa)) are Cytoplasmic-facing. S758 carries the post-translational modification Phosphoserine. Residues 812-823 (LVALYTVWVALK) form a helical membrane-spanning segment. Over 824 to 826 (EVS) the chain is Extracellular. The chain crosses the membrane as a helical span at residues 827-840 (VMNLLLVVLWAFAL). Residues 841 to 854 (PYPRFRPMASCLST) are Cytoplasmic-facing. A helical transmembrane segment spans residues 855 to 869 (VWTCIIIVCKMLYQL). Residues 870–921 (KIVNPHEYSSNCTEPFPNNTNLQPLEINQSLLYRGPVDPANWFGVRKGYPNL) are Extracellular-facing. A helical membrane pass occupies residues 922-949 (GYIQNHLQILLLLVFEAVVYRRQEHYRR). Over 950-989 (QHQQAPLPAQAVCADGTRQRLDQDLLSCLKYFINFFFYKF) the chain is Cytoplasmic. Residues 990–1005 (GLEICFLMAVNVIGQR) form a helical membrane-spanning segment. Over 1006-1007 (MN) the chain is Extracellular. The helical transmembrane segment at 1008–1023 (FMVILHGCWLVAILTR) threads the bilayer. Topologically, residues 1024-1036 (RRREAIARLWPNY) are cytoplasmic. A helical transmembrane segment spans residues 1037-1052 (CLFLTLFLLYQYLLCL). Residues 1053–1091 (GMPPALCIDYPWRWSKAIPMNSALIKWLYLPDFFRAPNS) lie on the Extracellular side of the membrane. Residues 1092 to 1113 (TNLISDFLLLLCASQQWQVFSA) form a helical membrane-spanning segment. Over 1114–1148 (ERTEEWQRMAGINTDHLEPLRGEPNPIPNFIHCRS) the chain is Cytoplasmic. The helical transmembrane segment at 1149–1175 (YLDMLKVAVFRYLFWLVLVVVFVAGAT) threads the bilayer. The Extracellular segment spans residues 1176–1180 (RISIF). A helical membrane pass occupies residues 1181–1199 (GLGYLLACFYLLLFGTTLL). Residues 1200 to 1212 (QKDTRAQLVLWDC) lie on the Cytoplasmic side of the membrane. Residues 1213–1231 (LILYNVTVIISKNMLSLLS) form a helical membrane-spanning segment. Topologically, residues 1232 to 1280 (CVFVEQMQSNFCWVIQLFSLVCTVKGYYDPKEMMTRDRDCLLPVEEAGI) are extracellular. A helical transmembrane segment spans residues 1281–1297 (IWDSICFFFLLLQRRIF). Topologically, residues 1298–1656 (LSHYFLHVSA…ELLLDRRLHI (359 aa)) are cytoplasmic. Residues 1334–1365 (HRQIEEKSLAQLKRQMKRIRAKQEKYRQSQAS) adopt a coiled-coil conformation. Disordered stretches follow at residues 1354-1396 (AKQE…RRQW), 1456-1480 (RRER…DVEP), and 1567-1610 (TLSG…NTRS). A compositionally biased stretch (polar residues) spans 1361–1372 (QSQASRGQLQSK). Low complexity predominate over residues 1376-1392 (DPSQEPGPDSPGGSSPP). S1385 and S1390 each carry phosphoserine. The span at 1592–1610 (SSMTDDTSSPLSTGYNTRS) shows a compositional bias: polar residues. A phosphoserine mark is found at S1627, S1631, and S1646. Residues 1657 to 1700 (PELEEAERFEAQQGRTLRLLRAGYQCVAAHSELLCYFIIILNHM) traverse the membrane as a helical segment. Residues 1701–1704 (VTAS) lie on the Extracellular side of the membrane. A helical transmembrane segment spans residues 1705-1720 (AASLVLPVLVFLWAML). Residues 1721–1728 (TIPRPSKR) are Cytoplasmic-facing. Residues 1729–1747 (FWMTAIVFTEVMVVTKYLF) traverse the membrane as a helical segment. Topologically, residues 1748–1779 (QFGFFPWNSYVVLRRYENKPYFPPRILGLEKT) are extracellular. Residues 1780 to 1801 (DSYIKYDLVQLMALFFHRSQLL) traverse the membrane as a helical segment. Topologically, residues 1802-1976 (CYGLWDHEED…HTKYRAATDV (175 aa)) are cytoplasmic. Basic and acidic residues-rich tracts occupy residues 1816 to 1837 (DHCR…KLES) and 1855 to 1880 (PRDH…DLKP). Residues 1816–1931 (DHCRSSVKDR…RPRHTQEKSK (116 aa)) form a disordered region. Residues 1881–1894 (RHTRHISIRFRRRK) are compositionally biased toward basic residues. Residues 1912-1931 (GEGKETTERKRPRHTQEKSK) show a composition bias toward basic and acidic residues. Residues 1977 to 1996 (YALMFLADIVDIIIIIFGFW) traverse the membrane as a helical segment. Over 1997-2016 (AFGKHSAATDIASSLSDDQV) the chain is Extracellular. Residues 2017-2033 (PQAFLFMLLVQFGTMVI) form a helical membrane-spanning segment. Residues 2034-2047 (DRALYLRKTVLGKL) are Cytoplasmic-facing. A helical transmembrane segment spans residues 2048 to 2068 (AFQVVLVVAIHIWMFFILPAV). The Extracellular portion of the chain corresponds to 2069 to 2076 (TERMFSQN). The helical transmembrane segment at 2077-2092 (AVAQLWYFVKCIYFAL) threads the bilayer. Residues 2093–2192 (SAYQIRCGYP…KKKIVKYGMG (100 aa)) lie on the Cytoplasmic side of the membrane. A helical membrane pass occupies residues 2193 to 2213 (GLIILFLIAIIWFPLLFMSLI). Over 2214–2457 (RSVVGVVNQP…IFSDKVSPPS (244 aa)) the chain is Extracellular. C2437 and C2441 form a disulfide bridge. The helical transmembrane segment at 2458–2478 (LGFLAGYGIVGLYVSIVLVVG) threads the bilayer. At 2479–2547 (KFVRGFFSEI…TMIKWTRERE (69 aa)) the chain is on the cytoplasmic side.

Belongs to the PIEZO (TC 1.A.75) family. In terms of assembly, homotrimer; the homotrimer forms a propeller-shaped Piezo channel with a cation-ion conducting pore. Heterotrimeric interaction may occur between PIEZO1 and PIEZO2. Interacts with PKD2. Interacts with STOMl3. Interacts with TMC1, TMC2, PCDG15 and CIB2; the interaction may be part of the MET complex. Interacts with MDFIC (via C-terminus); the interaction prolongs Piezo channel inactivation. Interacts with MDFI (via C-terminus); the interaction prolongs Piezo channel inactivation. As to expression, expressed in bladder, colon, kidney and skin. Also expressed in bone marrow, liver, lung, spleen and erythrocytes (at protein level). Expressed in myoblasts (at protein level). Expressed in red blood cells. Expressed in cochlear inner and outer hair cells (IHCs and OHCs) and vestibular organ HCs.

The protein resides in the endoplasmic reticulum membrane. It is found in the endoplasmic reticulum-Golgi intermediate compartment membrane. Its subcellular location is the cell membrane. It localises to the cell projection. The protein localises to the lamellipodium membrane. The catalysed reaction is K(+)(in) = K(+)(out). It carries out the reaction Na(+)(in) = Na(+)(out). The enzyme catalyses Ca(2+)(in) = Ca(2+)(out). It catalyses the reaction Mg(2+)(in) = Mg(2+)(out). Its activity is regulated as follows. Regulated by auxillary subunits MDFIC and MDFI. Down-regulated by phosphatidylserines exposed on the cell surface. Divalent ions decrease the single-channel permeability of K(+). Its function is as follows. Pore-forming subunit of the mechanosensitive non-specific cation Piezo channel required for rapidly adapting mechanically activated (MA) currents and has a key role in sensing touch and tactile pain. Piezo channels are homotrimeric three-blade propeller-shaped structures that utilize a cap-motion and plug-and-latch mechanism to gate their ion-conducting pathways. Generates currents characterized by a linear current-voltage relationship that are sensitive to ruthenium red and gadolinium. Conductance to monovalent alkali ions is highest for K(+), intermediate for Na(+) and lowest for Li(+). Divalent ions except for Mn(2+) permeate the channel but more slowly than the monovalent ions and they also reduce K(+) currents. Plays a key role in epithelial cell adhesion by maintaining integrin activation through R-Ras recruitment to the ER, most probably in its activated state, and subsequent stimulation of calpain signaling. In inner ear hair cells, PIEZO1/2 subunits may constitute part of the mechanotransducer (MET) non-selective cation channel complex where they may act as pore-forming ion-conducting component in the complex. In the kidney, may contribute to the detection of intraluminal pressure changes and to urine flow sensing. Acts as a shear-stress sensor that promotes endothelial cell organization and alignment in the direction of blood flow through calpain activation. Plays a key role in blood vessel formation and vascular structure in both development and adult physiology. Acts as a sensor of phosphatidylserine (PS) flipping at the plasma membrane and governs morphogenesis of muscle cells. In myoblasts, flippase-mediated PS enrichment at the inner leaflet of plasma membrane triggers channel activation and Ca(2+) influx followed by Rho GTPases signal transduction, leading to assembly of cortical actomyosin fibers and myotube formation. In Mus musculus (Mouse), this protein is Piezo-type mechanosensitive ion channel component 1.